A 1068-amino-acid chain; its full sequence is Self-sufficient cytochrome P450 monooxygenase CYP505U2 (1068 aa).

Cysteine 408 serves as a coordination point for heme. Positions 464-498 (TTAGMVPESVQSLRQAQKSGKPGNSKSSANESMVG) are disordered. Polar residues predominate over residues 472–498 (SVQSLRQAQKSGKPGNSKSSANESMVG). Residues 505 to 646 (VSIFYGSNSG…DLEKWEESIL (142 aa)) enclose the Flavodoxin-like domain. FMN-binding positions include 511-515 (SNSGS) and 590-622 (VFGC…QRVA). The region spanning 679 to 909 (KEFLEATVTS…RRSNPAFHPP (231 aa)) is the FAD-binding FR-type domain.

In the N-terminal section; belongs to the cytochrome P450 family. FAD serves as cofactor. Requires FMN as cofactor. The cofactor is heme.

The catalysed reaction is 2 oxidized [cytochrome P450] + NADPH = 2 reduced [cytochrome P450] + NADP(+) + H(+). It carries out the reaction an organic molecule + reduced [NADPH--hemoprotein reductase] + O2 = an alcohol + oxidized [NADPH--hemoprotein reductase] + H2O + H(+). The enzyme catalyses dodecanoate + reduced [NADPH--hemoprotein reductase] + O2 = 3-hydroxydodecanoate + oxidized [NADPH--hemoprotein reductase] + H2O + H(+). It catalyses the reaction dodecanoate + reduced [NADPH--hemoprotein reductase] + O2 = 7-hydroxydodecanoate + oxidized [NADPH--hemoprotein reductase] + H2O + H(+). The catalysed reaction is dodecan-1-ol + reduced [NADPH--hemoprotein reductase] + O2 = 1,4-dodecanediol + oxidized [NADPH--hemoprotein reductase] + H2O + H(+). It carries out the reaction dodecan-1-ol + reduced [NADPH--hemoprotein reductase] + O2 = 1,3-dodecanediol + oxidized [NADPH--hemoprotein reductase] + H2O + H(+). Functionally, self-sufficient cytochrome P450 monooxygenase that catalyzes the regioselective in-chain hydroxylation of alkanes, fatty alcohols, and fatty acids. Preferentially hydroxylates 1-dodecanol at C3 and C4 (positions omega-8 and omega-9). It is very likely that CYP505U2 prefers dodecanol, and probably other fatty alcohols, over fatty acids as substrates. Does not show any significant activity toward tetradecanoic acid. The polypeptide is Self-sufficient cytochrome P450 monooxygenase CYP505U2 (Exserohilum turcicum (strain 28A) (Northern leaf blight fungus)).